The sequence spans 72 residues: Large ribosomal subunit protein uL29 (72 aa).

Belongs to the universal ribosomal protein uL29 family.

This chain is Large ribosomal subunit protein uL29, found in Chlamydia trachomatis serovar L2 (strain ATCC VR-902B / DSM 19102 / 434/Bu).